Here is a 275-residue protein sequence, read N- to C-terminus: 4-hydroxy-3-methylbut-2-enyl diphosphate reductase (275 aa).

C12 provides a ligand contact to [4Fe-4S] cluster. Residues H40 and H70 each coordinate (2E)-4-hydroxy-3-methylbut-2-enyl diphosphate. H40 and H70 together coordinate dimethylallyl diphosphate. The isopentenyl diphosphate site is built by H40 and H70. C92 lines the [4Fe-4S] cluster pocket. (2E)-4-hydroxy-3-methylbut-2-enyl diphosphate is bound at residue H119. H119 serves as a coordination point for dimethylallyl diphosphate. H119 lines the isopentenyl diphosphate pocket. The Proton donor role is filled by E121. T151 contributes to the (2E)-4-hydroxy-3-methylbut-2-enyl diphosphate binding site. [4Fe-4S] cluster is bound at residue C181. Residues S209, S210, N211, and S251 each coordinate (2E)-4-hydroxy-3-methylbut-2-enyl diphosphate. Residues S209, S210, N211, and S251 each contribute to the dimethylallyl diphosphate site. Residues S209, S210, N211, and S251 each contribute to the isopentenyl diphosphate site.

Belongs to the IspH family. [4Fe-4S] cluster serves as cofactor.

The catalysed reaction is isopentenyl diphosphate + 2 oxidized [2Fe-2S]-[ferredoxin] + H2O = (2E)-4-hydroxy-3-methylbut-2-enyl diphosphate + 2 reduced [2Fe-2S]-[ferredoxin] + 2 H(+). It carries out the reaction dimethylallyl diphosphate + 2 oxidized [2Fe-2S]-[ferredoxin] + H2O = (2E)-4-hydroxy-3-methylbut-2-enyl diphosphate + 2 reduced [2Fe-2S]-[ferredoxin] + 2 H(+). It functions in the pathway isoprenoid biosynthesis; dimethylallyl diphosphate biosynthesis; dimethylallyl diphosphate from (2E)-4-hydroxy-3-methylbutenyl diphosphate: step 1/1. Its pathway is isoprenoid biosynthesis; isopentenyl diphosphate biosynthesis via DXP pathway; isopentenyl diphosphate from 1-deoxy-D-xylulose 5-phosphate: step 6/6. In terms of biological role, catalyzes the conversion of 1-hydroxy-2-methyl-2-(E)-butenyl 4-diphosphate (HMBPP) into a mixture of isopentenyl diphosphate (IPP) and dimethylallyl diphosphate (DMAPP). Acts in the terminal step of the DOXP/MEP pathway for isoprenoid precursor biosynthesis. In Thermotoga sp. (strain RQ2), this protein is 4-hydroxy-3-methylbut-2-enyl diphosphate reductase.